The chain runs to 498 residues: ATP synthase subunit beta, chloroplastic (498 aa).

Gly172–Thr179 contacts ATP.

It belongs to the ATPase alpha/beta chains family. As to quaternary structure, F-type ATPases have 2 components, CF(1) - the catalytic core - and CF(0) - the membrane proton channel. CF(1) has five subunits: alpha(3), beta(3), gamma(1), delta(1), epsilon(1). CF(0) has four main subunits: a(1), b(1), b'(1) and c(9-12).

It is found in the plastid. The protein localises to the chloroplast thylakoid membrane. The catalysed reaction is ATP + H2O + 4 H(+)(in) = ADP + phosphate + 5 H(+)(out). In terms of biological role, produces ATP from ADP in the presence of a proton gradient across the membrane. The catalytic sites are hosted primarily by the beta subunits. This chain is ATP synthase subunit beta, chloroplastic, found in Nypa fruticans (Nypa palm).